The chain runs to 89 residues: Protein FAM25A (89 aa).

This sequence belongs to the FAM25 family.

This chain is Protein FAM25A, found in Mus musculus (Mouse).